A 195-amino-acid polypeptide reads, in one-letter code: uncharacterized protein (195 aa).

The N-terminal stretch at 1–17 (MKASLITAFVLPLLALA) is a signal peptide. N75 is a glycosylation site (N-linked (GlcNAc...) asparagine).

The protein resides in the secreted. This is an uncharacterized protein from Arthroderma benhamiae (strain ATCC MYA-4681 / CBS 112371) (Trichophyton mentagrophytes).